A 194-amino-acid polypeptide reads, in one-letter code: Large ribosomal subunit protein bL25B (194 aa).

It belongs to the bacterial ribosomal protein bL25 family. CTC subfamily. Part of the 50S ribosomal subunit; part of the 5S rRNA/L5/L18/L25 subcomplex. Contacts the 5S rRNA. Binds to the 5S rRNA independently of L5 and L18.

Functionally, this is one of the proteins that binds to the 5S RNA in the ribosome where it forms part of the central protuberance. This chain is Large ribosomal subunit protein bL25B, found in Symbiobacterium thermophilum (strain DSM 24528 / JCM 14929 / IAM 14863 / T).